Consider the following 468-residue polypeptide: ATP synthase subunit beta (468 aa).

148–155 (GGAGVGKT) serves as a coordination point for ATP.

It belongs to the ATPase alpha/beta chains family. In terms of assembly, F-type ATPases have 2 components, CF(1) - the catalytic core - and CF(0) - the membrane proton channel. CF(1) has five subunits: alpha(3), beta(3), gamma(1), delta(1), epsilon(1). CF(0) has three main subunits: a(1), b(2) and c(9-12). The alpha and beta chains form an alternating ring which encloses part of the gamma chain. CF(1) is attached to CF(0) by a central stalk formed by the gamma and epsilon chains, while a peripheral stalk is formed by the delta and b chains.

The protein resides in the cell membrane. The catalysed reaction is ATP + H2O + 4 H(+)(in) = ADP + phosphate + 5 H(+)(out). Produces ATP from ADP in the presence of a proton gradient across the membrane. The catalytic sites are hosted primarily by the beta subunits. The chain is ATP synthase subunit beta from Stenotrophomonas maltophilia (strain K279a).